The sequence spans 190 residues: MTERIGPGAFVAVVGASGVGKDALMAYARERSEAVAHFPRRVITRPSGPGEDHEPVTEEQFTAARERGELAVWWPAHGLRYGIPASADVAVGAGRVVVANVSRAVLDELAGRYQRLVVVRVTVSDEVRAQRLRARGREPEPGIGQRLARPDPAPGHQADTVIQNDGTLADGGDQLLRVILDAAGAPLATG.

The interval 135 to 159 (RGREPEPGIGQRLARPDPAPGHQAD) is disordered.

This sequence belongs to the ribose 1,5-bisphosphokinase family.

It carries out the reaction alpha-D-ribose 1,5-bisphosphate + ATP = 5-phospho-alpha-D-ribose 1-diphosphate + ADP. The protein operates within metabolic intermediate biosynthesis; 5-phospho-alpha-D-ribose 1-diphosphate biosynthesis; 5-phospho-alpha-D-ribose 1-diphosphate from D-ribose 5-phosphate (route II): step 3/3. Its function is as follows. Catalyzes the phosphorylation of ribose 1,5-bisphosphate to 5-phospho-D-ribosyl alpha-1-diphosphate (PRPP). This is Ribose 1,5-bisphosphate phosphokinase PhnN from Pseudofrankia inefficax (strain DSM 45817 / CECT 9037 / DDB 130130 / EuI1c) (Frankia inefficax).